We begin with the raw amino-acid sequence, 731 residues long: 1,4-alpha-glucan branching enzyme GlgB (731 aa).

Asp-412 functions as the Nucleophile in the catalytic mechanism. Glu-465 acts as the Proton donor in catalysis.

The protein belongs to the glycosyl hydrolase 13 family. GlgB subfamily. Monomer.

It carries out the reaction Transfers a segment of a (1-&gt;4)-alpha-D-glucan chain to a primary hydroxy group in a similar glucan chain.. It functions in the pathway glycan biosynthesis; glycogen biosynthesis. Functionally, catalyzes the formation of the alpha-1,6-glucosidic linkages in glycogen by scission of a 1,4-alpha-linked oligosaccharide from growing alpha-1,4-glucan chains and the subsequent attachment of the oligosaccharide to the alpha-1,6 position. In Bordetella bronchiseptica (strain ATCC BAA-588 / NCTC 13252 / RB50) (Alcaligenes bronchisepticus), this protein is 1,4-alpha-glucan branching enzyme GlgB.